The sequence spans 695 residues: Protein arginine N-methyltransferase 7 (695 aa).

SAM-dependent MTase PRMT-type domains follow at residues 14 to 345 (SVEW…YCVW) and 358 to 684 (RVHP…ITMD). An Omega-N-methylarginine modification is found at arginine 32. Residues glutamate 144 and glutamate 153 contribute to the active site.

It belongs to the class I-like SAM-binding methyltransferase superfamily. Protein arginine N-methyltransferase family. PRMT7 subfamily. Homodimer and heterodimer. Interacts with CTCFL, PRMT5 and SNRPD3.

It is found in the cytoplasm. It localises to the cytosol. The protein resides in the nucleus. The catalysed reaction is L-arginyl-[protein] + S-adenosyl-L-methionine = N(omega)-methyl-L-arginyl-[protein] + S-adenosyl-L-homocysteine + H(+). Functionally, arginine methyltransferase that can both catalyze the formation of omega-N monomethylarginine (MMA) and symmetrical dimethylarginine (sDMA), with a preference for the formation of MMA. Specifically mediates the symmetrical dimethylation of arginine residues in the small nuclear ribonucleoproteins Sm D1 (SNRPD1) and Sm D3 (SNRPD3); such methylation being required for the assembly and biogenesis of snRNP core particles. Specifically mediates the symmetric dimethylation of histone H4 'Arg-3' to form H4R3me2s. Plays a role in gene imprinting by being recruited by CTCFL at the H19 imprinted control region (ICR) and methylating histone H4 to form H4R3me2s, possibly leading to recruit DNA methyltransferases at these sites. May also play a role in embryonic stem cell (ESC) pluripotency. Also able to mediate the arginine methylation of histone H2A and myelin basic protein (MBP) in vitro; the relevance of such results is however unclear in vivo. This chain is Protein arginine N-methyltransferase 7 (PRMT7), found in Bos taurus (Bovine).